A 279-amino-acid polypeptide reads, in one-letter code: Shikimate dehydrogenase (NADP(+)) (279 aa).

Shikimate-binding positions include 21–23 and threonine 68; that span reads SRS. The active-site Proton acceptor is lysine 72. Aspartate 83 contributes to the NADP(+) binding site. The shikimate site is built by asparagine 92 and aspartate 107. NADP(+) contacts are provided by residues 132-136, 156-161, and leucine 221; these read GAGGA and NRTVER. Tyrosine 223 lines the shikimate pocket. Glycine 244 contacts NADP(+).

It belongs to the shikimate dehydrogenase family. As to quaternary structure, homodimer.

It catalyses the reaction shikimate + NADP(+) = 3-dehydroshikimate + NADPH + H(+). It participates in metabolic intermediate biosynthesis; chorismate biosynthesis; chorismate from D-erythrose 4-phosphate and phosphoenolpyruvate: step 4/7. Functionally, involved in the biosynthesis of the chorismate, which leads to the biosynthesis of aromatic amino acids. Catalyzes the reversible NADPH linked reduction of 3-dehydroshikimate (DHSA) to yield shikimate (SA). The polypeptide is Shikimate dehydrogenase (NADP(+)) (Nitrobacter winogradskyi (strain ATCC 25391 / DSM 10237 / CIP 104748 / NCIMB 11846 / Nb-255)).